The following is a 347-amino-acid chain: Ribosomal RNA large subunit methyltransferase M (347 aa).

Residues serine 184, alanine 217–glycine 220, aspartate 236, aspartate 256, and aspartate 272 each bind S-adenosyl-L-methionine. Lysine 301 acts as the Proton acceptor in catalysis.

This sequence belongs to the class I-like SAM-binding methyltransferase superfamily. RNA methyltransferase RlmE family. RlmM subfamily. In terms of assembly, monomer.

Its subcellular location is the cytoplasm. It carries out the reaction cytidine(2498) in 23S rRNA + S-adenosyl-L-methionine = 2'-O-methylcytidine(2498) in 23S rRNA + S-adenosyl-L-homocysteine + H(+). Catalyzes the 2'-O-methylation at nucleotide C2498 in 23S rRNA. This is Ribosomal RNA large subunit methyltransferase M from Xanthomonas oryzae pv. oryzae (strain PXO99A).